We begin with the raw amino-acid sequence, 131 residues long: Glycine cleavage system H protein (131 aa).

In terms of domain architecture, Lipoyl-binding spans 24 to 106 (RVTVGISDHA…YGEGWIFVVE (83 aa)). Residue lysine 65 is modified to N6-lipoyllysine.

It belongs to the GcvH family. In terms of assembly, the glycine cleavage system is composed of four proteins: P, T, L and H. (R)-lipoate serves as cofactor.

Functionally, the glycine cleavage system catalyzes the degradation of glycine. The H protein shuttles the methylamine group of glycine from the P protein to the T protein. The polypeptide is Glycine cleavage system H protein (Xanthomonas oryzae pv. oryzae (strain MAFF 311018)).